The chain runs to 212 residues: Actin-depolymerizing factor 1, isoforms a/b (212 aa).

Residues 3-159 (SGVMVDPDVQ…SHKELLNNCP (157 aa)) enclose the ADF-H domain.

The protein belongs to the actin-binding proteins ADF family. As to quaternary structure, interacts with F-actin.

Its function is as follows. Depolymerizes growing actin filaments in muscle cells; required for the assembly of actin filaments into the functional contractile myofilament lattice of muscle. Competes with unc-87 for actin binding and inhibits the actin-bundling activity of unc-87. The protein is Actin-depolymerizing factor 1, isoforms a/b of Caenorhabditis elegans.